The following is a 657-amino-acid chain: Protein FAM200B (657 aa).

Belongs to the FAM200 family.

This is Protein FAM200B from Homo sapiens (Human).